Consider the following 220-residue polypeptide: Small ribosomal subunit protein uS2 (220 aa).

It belongs to the universal ribosomal protein uS2 family.

This Methanococcus maripaludis (strain C5 / ATCC BAA-1333) protein is Small ribosomal subunit protein uS2.